A 96-amino-acid polypeptide reads, in one-letter code: Co-chaperonin GroES (96 aa).

The protein belongs to the GroES chaperonin family. Heptamer of 7 subunits arranged in a ring. Interacts with the chaperonin GroEL.

The protein localises to the cytoplasm. In terms of biological role, together with the chaperonin GroEL, plays an essential role in assisting protein folding. The GroEL-GroES system forms a nano-cage that allows encapsulation of the non-native substrate proteins and provides a physical environment optimized to promote and accelerate protein folding. GroES binds to the apical surface of the GroEL ring, thereby capping the opening of the GroEL channel. This Syntrophomonas wolfei subsp. wolfei (strain DSM 2245B / Goettingen) protein is Co-chaperonin GroES.